Reading from the N-terminus, the 547-residue chain is Sesterfisheric acid synthase (547 aa).

Residues 19–39 traverse the membrane as a helical segment; that stretch reads IMGCSLGTGLLVSMIIYNYFF. Residues Asn341 and Asn404 are each glycosylated (N-linked (GlcNAc...) asparagine). Cys490 lines the heme pocket.

This sequence belongs to the cytochrome P450 family. Heme is required as a cofactor.

It localises to the membrane. The enzyme catalyses sesterfisherol + 3 reduced [NADPH--hemoprotein reductase] + 3 O2 = sesterfisherate + 3 oxidized [NADPH--hemoprotein reductase] + 4 H2O + 4 H(+). Its pathway is secondary metabolite biosynthesis; terpenoid biosynthesis. Its function is as follows. Cytochrome P450 monooxygenase; part of the gene cluster that mediates the biosynthesis of sesterfisheric acid. The bifunctional terpene synthase NfSS converts DMAPP and IPP, and also GGPP, into sesterfisherol. The C-terminal prenyltransferase (PT) domain of NfSS catalyzes formation of GFPP, whereas the N-terminal terpene cyclase (TC) domain catalyzes the cyclization of GFPP to sesterfisherol. The cytochrome P450 monooxygenase NfP450 then catalyzes oxidative modifications of sesterfisherol into sesterfisheric acid. The sequence is that of Sesterfisheric acid synthase from Neosartorya fischeri (strain ATCC 1020 / DSM 3700 / CBS 544.65 / FGSC A1164 / JCM 1740 / NRRL 181 / WB 181) (Aspergillus fischerianus).